The sequence spans 311 residues: Formimidoylglutamase (311 aa).

The Mn(2+) site is built by His130, Asp155, His157, Asp159, Cys242, and Asp244.

This sequence belongs to the arginase family. Mn(2+) serves as cofactor.

The catalysed reaction is N-formimidoyl-L-glutamate + H2O = formamide + L-glutamate. It functions in the pathway amino-acid degradation; L-histidine degradation into L-glutamate; L-glutamate from N-formimidoyl-L-glutamate (hydrolase route): step 1/1. Catalyzes the conversion of N-formimidoyl-L-glutamate to L-glutamate and formamide. The sequence is that of Formimidoylglutamase from Staphylococcus haemolyticus (strain JCSC1435).